The following is a 445-amino-acid chain: Glycine--tRNA ligase (445 aa).

2 residues coordinate substrate: Arg-97 and Glu-145. Residues 177–179 (RNE), 187–192 (FRTCEF), 262–263 (EV), and 308–311 (GLTR) contribute to the ATP site. Residue 192-196 (FEQME) participates in substrate binding. Position 304–308 (304–308 (ETSAG)) interacts with substrate.

It belongs to the class-II aminoacyl-tRNA synthetase family. As to quaternary structure, homodimer.

Its subcellular location is the cytoplasm. The enzyme catalyses tRNA(Gly) + glycine + ATP = glycyl-tRNA(Gly) + AMP + diphosphate. In terms of biological role, catalyzes the attachment of glycine to tRNA(Gly). This chain is Glycine--tRNA ligase, found in Borrelia garinii subsp. bavariensis (strain ATCC BAA-2496 / DSM 23469 / PBi) (Borreliella bavariensis).